We begin with the raw amino-acid sequence, 50 residues long: Monellin chain B (50 aa).

In terms of assembly, heterodimer of an A chain and a B chain.

In terms of biological role, taste-modifying protein; intensely sweet-tasting protein. In Dioscoreophyllum cumminsii (Serendipity berry), this protein is Monellin chain B.